The primary structure comprises 252 residues: MALLQLLLFAMLAACGFSEEQTEGITIAYKVLEVYPQSRRVLITCDAPEASQPITYSLLASRGILVAKKVVHDSVPASFNINITIKSSPDLLTYSCQATSNSGTYGPSSRLQMYQELWAKPVSQLQADFVLRHGDSGPTVELSCLASSGSPPITYRLVGNGGRVLAQQRPLHGKPANFSLPLSQTTGWFQCEAENDVGVDSSARIPLPRAEARAKLVTTLAGELPLTPTCILAGSLVSIAVIASRMLSSTGL.

An N-terminal signal peptide occupies residues 1–18 (MALLQLLLFAMLAACGFS). N-linked (GlcNAc...) asparagine glycans are attached at residues Asn82 and Asn177.

Expressed in bone marrow, spleen and lymph node.

The protein localises to the secreted. In terms of biological role, probable B cell-associated cytokine that plays a role in the regulation of humoral immune responses. Involved in lymphocyte B cell development and immunoglobulin/IgA production. This chain is Protein IL-40, found in Mus musculus (Mouse).